The chain runs to 670 residues: Histone-lysine N-methyltransferase, H3 lysine-9 specific SUVH1 (670 aa).

Residues 53 to 140 are disordered; the sequence is YPFSSSQANQ…RPISRPENMN (88 aa). Over residues 68–79 the composition is skewed to low complexity; it reads NQAQYPPQHQQP. A compositionally biased stretch (basic residues) spans 123–133; it reads VKRRIPKKRPI. A YDG domain is found at 211-357; that stretch reads GIVPGVEIGD…HNTFKYKLVR (147 aa). A Pre-SET domain is found at 432–492; the sequence is FGCDCANLCK…TCKNKVTQMG (61 aa). Residues cysteine 434, cysteine 436, cysteine 440, cysteine 447, cysteine 449, cysteine 475, cysteine 479, cysteine 481, and cysteine 484 each coordinate Zn(2+). Residues 495-639 form the SET domain; it reads VRLEVFKTAN…PMTELTYDYG (145 aa). S-adenosyl-L-methionine contacts are provided by residues 505–507, aspartate 541, tyrosine 543, arginine 593, and 596–597; these read RGW and NH. Zn(2+)-binding residues include cysteine 599, cysteine 658, cysteine 660, and cysteine 665. One can recognise a Post-SET domain in the interval 654 to 670; sequence GKRKCFCGSAYCRGSFG.

This sequence belongs to the class V-like SAM-binding methyltransferase superfamily. Histone-lysine methyltransferase family. Suvar3-9 subfamily. As to expression, expressed in leaves stems and flowers.

The protein localises to the nucleus. Its subcellular location is the chromosome. It localises to the centromere. The catalysed reaction is L-lysyl(9)-[histone H3] + 2 S-adenosyl-L-methionine = N(6),N(6)-dimethyl-L-lysyl(9)-[histone H3] + 2 S-adenosyl-L-homocysteine + 2 H(+). Its function is as follows. Histone methyltransferase. Methylates 'Lys-9' of histone H3. H3 'Lys-9' methylation represents a specific tag for epigenetic transcriptional repression. The polypeptide is Histone-lysine N-methyltransferase, H3 lysine-9 specific SUVH1 (SUVH1) (Arabidopsis thaliana (Mouse-ear cress)).